Consider the following 436-residue polypeptide: Septin-7 (436 aa).

Serine 2 carries the post-translational modification N-acetylserine. Tyrosine 29 is modified (phosphotyrosine). The 270-residue stretch at 46–315 folds into the Septin-type G domain; that stretch reads RGFEFTLMVV…ENYRSRKLAA (270 aa). The interval 46–316 is interaction with SEPTIN12; sequence RGFEFTLMVV…NYRSRKLAAV (271 aa). Positions 56–63 are G1 motif; it reads GESGLGKS. GTP is bound at residue 56–63; sequence GESGLGKS. Serine 76 is subject to Phosphoserine. GTP contacts are provided by residues threonine 89, glycine 115, and 194-202; that span reads KADTLTPEE. The tract at residues 112-115 is G3 motif; the sequence is DTPG. The G4 motif stretch occupies residues 193–196; the sequence is AKAD. The residue at position 227 (threonine 227) is a Phosphothreonine. Glycine 249 and arginine 264 together coordinate GTP. A coiled-coil region spans residues 331 to 436; the sequence is TKSPLAQMEE…EKNKKKGKIF (106 aa). Serine 333 carries the post-translational modification Phosphoserine. Lysine 372 carries the N6-acetyllysine modification. Residues 377 to 409 show a composition bias toward basic and acidic residues; that stretch reads ELQRRHEQMKKNLEAQHKELEEKRRQFEEEKAN. The interval 377 to 436 is disordered; that stretch reads ELQRRHEQMKKNLEAQHKELEEKRRQFEEEKANWEAQQRILEQQNSSRTLEKNKKKGKIF. Serine 423 carries the post-translational modification Phosphoserine. Position 425 is a phosphothreonine (threonine 425).

This sequence belongs to the TRAFAC class TrmE-Era-EngA-EngB-Septin-like GTPase superfamily. Septin GTPase family. As to quaternary structure, septins polymerize into heterooligomeric protein complexes that form filaments, and associate with cellular membranes, actin filaments and microtubules. GTPase activity is required for filament formation. Filaments are assembled from asymmetrical heterotrimers, composed of SEPTIN2, SEPTIN6 and SEPTIN7 that associate head-to-head to form a hexameric unit. Within the trimer, directly interacts with SEPTIN6, while interaction with SEPTIN2 seems indirect. In the absence of SEPTIN6, forms homodimers. Interacts directly with CENPE and links CENPE to septin filaments composed of SEPTIN2, SEPTIN6 and SEPTIN7. Interacts with SEPTIN8, SEPTIN9 and SEPTIN11. Component of a septin core octameric complex consisting of SEPTIN12, SEPTIN7, SEPTIN6 and SEPTIN2 or SEPTIN4 in the order 12-7-6-2-2-6-7-12 or 12-7-6-4-4-6-7-12 and located in the sperm annulus; the SEPTIN12:SEPTIN7 association is mediated by the respective GTP-binding domains. Interacts with SEPTIN2 and SEPTIN5. As to expression, expressed in the cerebral cortex (at protein level).

Its subcellular location is the cytoplasm. The protein localises to the chromosome. The protein resides in the centromere. It localises to the kinetochore. It is found in the cytoskeleton. Its subcellular location is the spindle. The protein localises to the cleavage furrow. The protein resides in the midbody. It localises to the cilium axoneme. It is found in the cell projection. Its subcellular location is the cilium. The protein localises to the flagellum. Filament-forming cytoskeletal GTPase. Required for normal organization of the actin cytoskeleton. Required for normal progress through mitosis. Involved in cytokinesis. Required for normal association of CENPE with the kinetochore. Plays a role in ciliogenesis and collective cell movements. Forms a filamentous structure with SEPTIN12, SEPTIN6, SEPTIN2 and probably SEPTIN4 at the sperm annulus which is required for the structural integrity and motility of the sperm tail during postmeiotic differentiation. This chain is Septin-7, found in Mus musculus (Mouse).